A 185-amino-acid polypeptide reads, in one-letter code: Isopentenyl-diphosphate Delta-isomerase (185 aa).

Mn(2+) is bound by residues histidine 27 and histidine 34. A Nudix hydrolase domain is found at proline 32 to leucine 168. Cysteine 69 is an active-site residue. Cysteine 69 contacts Mg(2+). A Mn(2+)-binding site is contributed by histidine 71. Glutamate 89 is a Mg(2+) binding site. 2 residues coordinate Mn(2+): glutamate 118 and glutamate 120. Glutamate 120 is an active-site residue.

It belongs to the IPP isomerase type 1 family. Mg(2+) is required as a cofactor. It depends on Mn(2+) as a cofactor.

It is found in the cytoplasm. It carries out the reaction isopentenyl diphosphate = dimethylallyl diphosphate. Its pathway is isoprenoid biosynthesis; dimethylallyl diphosphate biosynthesis; dimethylallyl diphosphate from isopentenyl diphosphate: step 1/1. Catalyzes the 1,3-allylic rearrangement of the homoallylic substrate isopentenyl (IPP) to its highly electrophilic allylic isomer, dimethylallyl diphosphate (DMAPP). In Leifsonia xyli subsp. xyli (strain CTCB07), this protein is Isopentenyl-diphosphate Delta-isomerase.